The chain runs to 76 residues: Monocarboxylate transporter 1 (76 aa).

Helical transmembrane passes span 1-18 (LSILAFVDMVARPSMGLA), 28-48 (IQYFFAASVVANGVCHLLAPL), and 53-73 (IGFCVYAGVFGFAFGWLSSVL). Residue Asp-8 coordinates H(+). Arg-12 provides a ligand contact to (S)-lactate.

The protein belongs to the major facilitator superfamily. Monocarboxylate porter (TC 2.A.1.13) family. As to quaternary structure, interacts with BSG; interaction mediates SLC16A1 targeting to the plasma membrane. Interacts with EMB; interaction mediates SLC16A1 targeting to the plasma membrane.

The protein localises to the cell membrane. Its subcellular location is the basolateral cell membrane. It localises to the apical cell membrane. The catalysed reaction is (S)-lactate(in) + H(+)(in) = (S)-lactate(out) + H(+)(out). It carries out the reaction acetate(out) + H(+)(out) = acetate(in) + H(+)(in). It catalyses the reaction acetoacetate(out) + H(+)(out) = acetoacetate(in) + H(+)(in). The enzyme catalyses pyruvate(out) + H(+)(out) = pyruvate(in) + H(+)(in). The catalysed reaction is (R)-3-hydroxybutanoate(out) + H(+)(out) = (R)-3-hydroxybutanoate(in) + H(+)(in). It carries out the reaction 3-methyl-2-oxobutanoate(out) + H(+)(out) = 3-methyl-2-oxobutanoate(in) + H(+)(in). It catalyses the reaction 4-methyl-2-oxopentanoate(out) + H(+)(out) = 4-methyl-2-oxopentanoate(in) + H(+)(in). The enzyme catalyses succinate(in) + 2 H(+)(in) = succinate(out) + 2 H(+)(out). In terms of biological role, bidirectional proton-coupled monocarboxylate transporter. Catalyzes the rapid transport across the plasma membrane of many monocarboxylates such as lactate, pyruvate, acetate and the ketone bodies acetoacetate and beta-hydroxybutyrate, and thus contributes to the maintenance of intracellular pH. The transport direction is determined by the proton motive force and the concentration gradient of the substrate monocarboxylate. MCT1 is a major lactate exporter. Plays a role in cellular responses to a high-fat diet by modulating the cellular levels of lactate and pyruvate that contribute to the regulation of central metabolic pathways and insulin secretion, with concomitant effects on plasma insulin levels and blood glucose homeostasis. Facilitates the protonated monocarboxylate form of succinate export, that its transient protonation upon muscle cell acidification in exercising muscle and ischemic heart. Functions via alternate outward- and inward-open conformation states. Protonation and deprotonation is essential for the conformational transition. This chain is Monocarboxylate transporter 1 (SLC16A1), found in Meriones unguiculatus (Mongolian jird).